The sequence spans 134 residues: Profilin-3 (134 aa).

Cys-13 and Cys-118 are oxidised to a cystine. The Involved in PIP2 interaction signature appears at 84–100 (AVIRGKKGSGGITIKKT). Thr-114 is modified (phosphothreonine).

Belongs to the profilin family. As to quaternary structure, occurs in many kinds of cells as a complex with monomeric actin in a 1:1 ratio. Post-translationally, phosphorylated by MAP kinases.

It localises to the cytoplasm. Its subcellular location is the cytoskeleton. Functionally, binds to actin and affects the structure of the cytoskeleton. At high concentrations, profilin prevents the polymerization of actin, whereas it enhances it at low concentrations. This chain is Profilin-3, found in Olea europaea (Common olive).